Here is a 366-residue protein sequence, read N- to C-terminus: Isocitrate dehydrogenase [NAD] subunit alpha, mitochondrial (366 aa).

Residues 1–27 constitute a mitochondrion transit peptide; the sequence is MAGPAWISKVSRLLGAFHNPKQVTRGF. K77 bears the N6-succinyllysine mark. T101 carries the post-translational modification Phosphothreonine. 3 residues coordinate substrate: R115, R125, and R146. An N6-acetyllysine modification is found at K223. Mg(2+) is bound by residues D233, D257, and D261. An N6-acetyllysine; alternate modification is found at K343. Residue K343 is modified to N6-succinyllysine; alternate. At K350 the chain carries N6-succinyllysine.

This sequence belongs to the isocitrate and isopropylmalate dehydrogenases family. As to quaternary structure, heterooligomer of subunits alpha (IDH3A), beta (IDH3B), and gamma (IDH3G) in the apparent ratio of 2:1:1. The heterodimer containing one IDH3A and one IDH3B subunit and the heterodimer containing one IDH3A and one IDH3G subunit assemble into a heterotetramer (which contains two subunits of IDH3A, one of IDH3B and one of IDH3G) and further into the heterooctamer. Mg(2+) serves as cofactor. It depends on Mn(2+) as a cofactor.

The protein localises to the mitochondrion. It catalyses the reaction D-threo-isocitrate + NAD(+) = 2-oxoglutarate + CO2 + NADH. Its activity is regulated as follows. The heterotetramer and the heterodimer composed of IDH3A and IDH3G subunits can be allosterically activated by citrate (CIT) or/and ADP, and the two activators can act independently or synergistically. The heterodimer composed of IDH3A and IDH3B subunits cannot be allosterically regulated and the allosteric regulation of the heterotetramer is through the IDH3G subunit and not the IDH3B subunit. The IDH3G subunit contains the allosteric site which consists of a CIT-binding site and an ADP-binding site, and the binding of CIT and ADP causes conformational changes at the allosteric site which are transmitted to the active site in the catalytic subunit (IDH3A) through a cascade of conformational changes at the heterodimer interface, leading to stabilization of the isocitrate-binding at the active site and thus activation of the enzyme. ATP can activate the heterotetramer and the heterodimer composed of IDH3A and IDH3G subunits at low concentrations but inhibits their activities at high concentrations, whereas ATP exhibits only inhibitory effect on the heterodimer composed of IDH3A and IDH3B subunits. In terms of biological role, catalytic subunit of the enzyme which catalyzes the decarboxylation of isocitrate (ICT) into alpha-ketoglutarate. The heterodimer composed of the alpha (IDH3A) and beta (IDH3B) subunits and the heterodimer composed of the alpha (IDH3A) and gamma (IDH3G) subunits, have considerable basal activity but the full activity of the heterotetramer (containing two subunits of IDH3A, one of IDH3B and one of IDH3G) requires the assembly and cooperative function of both heterodimers. The chain is Isocitrate dehydrogenase [NAD] subunit alpha, mitochondrial from Pongo abelii (Sumatran orangutan).